The primary structure comprises 349 residues: B3 domain-containing protein At5g24050 (349 aa).

Residues 240–341 constitute a DNA-binding region (TF-B3); sequence FNNLLRNDFL…ILCFAMEQSS (102 aa).

The protein resides in the nucleus. This Arabidopsis thaliana (Mouse-ear cress) protein is B3 domain-containing protein At5g24050.